A 278-amino-acid chain; its full sequence is MNNILSEEVLNVTDFTTSRQLTLWKREDLQSPQLDDVAEEVPVALVYNGISHVVMMASPKDLTHFAMGFSLSEGIIDSPREIYGMDVVPSCNGLEVQIDLSSRRFMGLKARRRALAGRTGCGVCGVEQLNDIGKPVQPLPFSQTFNLGNLDRALKHLNDFQPTGKLTGCTHAAAWVMPSGELAGGHEDVGRHVALDKLLGRRATEGEEWRQGAALVSSRASYEMVQKSAMCGVEILFAVSAATTLAVDVAERCNLTLVGFCKPGRATIYTHPQRLIAD.

The Cysteine persulfide intermediate role is filled by C121. 260–265 (FCKPGR) contacts Mo-bis(molybdopterin guanine dinucleotide).

Belongs to the FdhD family.

It is found in the cytoplasm. Functionally, required for formate dehydrogenase (FDH) activity. Acts as a sulfur carrier protein that transfers sulfur from IscS to the molybdenum cofactor prior to its insertion into FDH. This is Sulfur carrier protein FdhD from Salmonella agona (strain SL483).